A 221-amino-acid polypeptide reads, in one-letter code: PKHD-type hydroxylase P9215_13741 (221 aa).

The region spanning 80–174 is the Fe2OG dioxygenase domain; that stretch reads RIHGTMFTKT…RFVVVGWIES (95 aa). H98, D100, and H155 together coordinate Fe cation. R165 provides a ligand contact to 2-oxoglutarate.

Requires Fe(2+) as cofactor. L-ascorbate serves as cofactor.

The protein is PKHD-type hydroxylase P9215_13741 of Prochlorococcus marinus (strain MIT 9215).